A 311-amino-acid polypeptide reads, in one-letter code: Ribose-phosphate pyrophosphokinase (311 aa).

Residues 34–36 and 93–94 contribute to the ATP site; these read DQE and RQ. Positions 127 and 168 each coordinate Mg(2+). The active site involves Lys191. D-ribose 5-phosphate contacts are provided by residues Arg193, Asp217, and 221–225; that span reads DSGGT.

Belongs to the ribose-phosphate pyrophosphokinase family. Class I subfamily. In terms of assembly, homohexamer. Requires Mg(2+) as cofactor.

The protein resides in the cytoplasm. It catalyses the reaction D-ribose 5-phosphate + ATP = 5-phospho-alpha-D-ribose 1-diphosphate + AMP + H(+). It participates in metabolic intermediate biosynthesis; 5-phospho-alpha-D-ribose 1-diphosphate biosynthesis; 5-phospho-alpha-D-ribose 1-diphosphate from D-ribose 5-phosphate (route I): step 1/1. In terms of biological role, involved in the biosynthesis of the central metabolite phospho-alpha-D-ribosyl-1-pyrophosphate (PRPP) via the transfer of pyrophosphoryl group from ATP to 1-hydroxyl of ribose-5-phosphate (Rib-5-P). This chain is Ribose-phosphate pyrophosphokinase, found in Mesorhizobium japonicum (strain LMG 29417 / CECT 9101 / MAFF 303099) (Mesorhizobium loti (strain MAFF 303099)).